Reading from the N-terminus, the 371-residue chain is Chorismate synthase (371 aa).

NADP(+)-binding residues include arginine 48 and arginine 54. Residues 130–132, 242–243, glycine 287, 302–306, and arginine 328 each bind FMN; these read RSS, NA, and KPTSS.

Belongs to the chorismate synthase family. In terms of assembly, homotetramer. Requires FMNH2 as cofactor.

The enzyme catalyses 5-O-(1-carboxyvinyl)-3-phosphoshikimate = chorismate + phosphate. It participates in metabolic intermediate biosynthesis; chorismate biosynthesis; chorismate from D-erythrose 4-phosphate and phosphoenolpyruvate: step 7/7. Its function is as follows. Catalyzes the anti-1,4-elimination of the C-3 phosphate and the C-6 proR hydrogen from 5-enolpyruvylshikimate-3-phosphate (EPSP) to yield chorismate, which is the branch point compound that serves as the starting substrate for the three terminal pathways of aromatic amino acid biosynthesis. This reaction introduces a second double bond into the aromatic ring system. The polypeptide is Chorismate synthase (Azorhizobium caulinodans (strain ATCC 43989 / DSM 5975 / JCM 20966 / LMG 6465 / NBRC 14845 / NCIMB 13405 / ORS 571)).